We begin with the raw amino-acid sequence, 362 residues long: tRNA-specific 2-thiouridylase MnmA (362 aa).

ATP contacts are provided by residues 13 to 20 and Met39; that span reads GLSGGVDS. Positions 99–101 are interaction with target base in tRNA; sequence NPD. Cys104 functions as the Nucleophile in the catalytic mechanism. Cys104 and Cys200 are disulfide-bonded. Residue Gly128 coordinates ATP. An interaction with tRNA region spans residues 150 to 152; that stretch reads KDQ. The active-site Cysteine persulfide intermediate is Cys200. The segment at 310-311 is interaction with tRNA; sequence RY.

Belongs to the MnmA/TRMU family.

The protein localises to the cytoplasm. It catalyses the reaction S-sulfanyl-L-cysteinyl-[protein] + uridine(34) in tRNA + AH2 + ATP = 2-thiouridine(34) in tRNA + L-cysteinyl-[protein] + A + AMP + diphosphate + H(+). In terms of biological role, catalyzes the 2-thiolation of uridine at the wobble position (U34) of tRNA, leading to the formation of s(2)U34. This Vesicomyosocius okutanii subsp. Calyptogena okutanii (strain HA) protein is tRNA-specific 2-thiouridylase MnmA.